Consider the following 77-residue polypeptide: Conotoxin VnMEKL-023 (77 aa).

The signal sequence occupies residues 1 to 19 (MQKLTILLLVAAVLMSTQA). The propeptide occupies 20 to 37 (LIKGGGEKRPKEKIRFLS). 3 disulfides stabilise this stretch: Cys-51/Cys-65, Cys-58/Cys-69, and Cys-64/Cys-74.

It belongs to the conotoxin O2 superfamily. As to expression, expressed by the venom duct.

It is found in the secreted. The sequence is that of Conotoxin VnMEKL-023 from Conus ventricosus (Mediterranean cone).